A 315-amino-acid polypeptide reads, in one-letter code: Glycine--tRNA ligase alpha subunit (315 aa).

Belongs to the class-II aminoacyl-tRNA synthetase family. As to quaternary structure, tetramer of two alpha and two beta subunits.

It is found in the cytoplasm. The catalysed reaction is tRNA(Gly) + glycine + ATP = glycyl-tRNA(Gly) + AMP + diphosphate. This chain is Glycine--tRNA ligase alpha subunit, found in Pseudomonas putida (strain W619).